The primary structure comprises 52 residues: Large ribosomal subunit protein bL33 (52 aa).

This sequence belongs to the bacterial ribosomal protein bL33 family.

In Chlamydia muridarum (strain MoPn / Nigg), this protein is Large ribosomal subunit protein bL33 (rpmG).